We begin with the raw amino-acid sequence, 231 residues long: MCGNTMSVPLLTDAATVSGAERETAAVIFLHGLGDTGHSWADALSTIRLPHVKYICPHAPRIPVTLNMKMVMPSWFDLMGLSPDAPEDEAGIKKAAENIKALIEHEMKNGIPANRIVLGGFSQGGALSLYTALTCPHPLAGIVALSCWLPLHRAFPQAANGSAKDLAILQCHGELDPMVPVRFGALTAEKLRSVVTPARVQFKTYPGVMHSSCPQEMAAVKEFLEKLLPPV.

The S-palmitoyl cysteine moiety is linked to residue Cys2. Phosphoserine is present on Ser82. Residues Ser122, Asp176, and His210 each act as charge relay system in the active site.

Belongs to the AB hydrolase superfamily. AB hydrolase 2 family. In terms of tissue distribution, expressed in various breast cancer cell lines.

The protein resides in the cytoplasm. The enzyme catalyses S-hexadecanoyl-L-cysteinyl-[protein] + H2O = L-cysteinyl-[protein] + hexadecanoate + H(+). It catalyses the reaction prostaglandin E2 1-glyceryl ester + H2O = prostaglandin E2 + glycerol + H(+). It carries out the reaction 1-hexadecanoyl-sn-glycero-3-phosphocholine + H2O = sn-glycerol 3-phosphocholine + hexadecanoate + H(+). The catalysed reaction is 1-octadecanoyl-sn-glycero-3-phosphocholine + H2O = octadecanoate + sn-glycerol 3-phosphocholine + H(+). The enzyme catalyses 1-hexadecanoyl-sn-glycero-3-phosphate + H2O = sn-glycerol 3-phosphate + hexadecanoate + H(+). It catalyses the reaction 1-hexadecanoyl-sn-glycero-3-phospho-L-serine + H2O = sn-glycero-3-phospho-L-serine + hexadecanoate + H(+). With respect to regulation, inhibited by compound 1 or (5,5-Dioxido-4H-thieno[3,2-c]thiochromen-2-yl)(4-(4-methoxyphenyl)piperazin-1-yl)methanone. Its function is as follows. Acts as an acyl-protein thioesterase hydrolyzing fatty acids from S-acylated cysteine residues in proteins such as trimeric G alpha proteins, GSDMD, GAP43, ZDHHC6 or HRAS. Deacylates GAP43. Mediates depalmitoylation of ZDHHC6. Has lysophospholipase activity. Hydrolyzes prostaglandin glycerol esters (PG-Gs) in the following order prostaglandin D2-glycerol ester (PGD2-G) &gt; prostaglandin E2 glycerol ester (PGE2-G) &gt; prostaglandin F2-alpha-glycerol ester (PGF2-alpha-G). Hydrolyzes 1-arachidonoylglycerol but not 2-arachidonoylglycerol or arachidonoylethanolamide. The chain is Acyl-protein thioesterase 2 (LYPLA2) from Homo sapiens (Human).